We begin with the raw amino-acid sequence, 206 residues long: Thymidylate kinase (206 aa).

ATP is bound at residue 11-18 (GIDGAGKT).

This sequence belongs to the thymidylate kinase family.

It carries out the reaction dTMP + ATP = dTDP + ADP. In terms of biological role, phosphorylation of dTMP to form dTDP in both de novo and salvage pathways of dTTP synthesis. In Burkholderia vietnamiensis (strain G4 / LMG 22486) (Burkholderia cepacia (strain R1808)), this protein is Thymidylate kinase.